Here is a 248-residue protein sequence, read N- to C-terminus: tRNA (guanine-N(1)-)-methyltransferase (248 aa).

S-adenosyl-L-methionine-binding positions include Gly-113 and 133 to 138; that span reads IGDFVL.

The protein belongs to the RNA methyltransferase TrmD family. Homodimer.

It is found in the cytoplasm. It catalyses the reaction guanosine(37) in tRNA + S-adenosyl-L-methionine = N(1)-methylguanosine(37) in tRNA + S-adenosyl-L-homocysteine + H(+). In terms of biological role, specifically methylates guanosine-37 in various tRNAs. This is tRNA (guanine-N(1)-)-methyltransferase from Dehalococcoides mccartyi (strain ATCC BAA-2100 / JCM 16839 / KCTC 5957 / BAV1).